A 116-amino-acid polypeptide reads, in one-letter code: MSSAAEQAMPIEFTEQAASKVGKLIAEEENPNLKLRVYVTGGGCSGFQYGFTFDEKKNPGDMEIEKNGVTLLVDPMSLQYLMGGVVSYEEGLQGSRFFVDNPNATTTCGCGSSFSV.

Iron-sulfur cluster contacts are provided by Cys44, Cys108, and Cys110.

Belongs to the HesB/IscA family. In terms of assembly, homodimer. Requires iron-sulfur cluster as cofactor.

Functionally, required for insertion of 4Fe-4S clusters for at least IspG. The polypeptide is Iron-sulfur cluster insertion protein ErpA (Idiomarina loihiensis (strain ATCC BAA-735 / DSM 15497 / L2-TR)).